The sequence spans 488 residues: Histone deacetylase 2 (488 aa).

The tract at residues 9-322 (KKKVCYYYDG…WTYETAVALD (314 aa)) is histone deacetylase. Glycine 28 and lysine 32 together coordinate 1D-myo-inositol 1,4,5,6-tetrakisphosphate. Lysine 75 bears the N6-acetyllysine; alternate mark. Residue lysine 75 forms a Glycyl lysine isopeptide (Lys-Gly) (interchain with G-Cter in SUMO2); alternate linkage. The active site involves histidine 142. Ca(2+) contacts are provided by aspartate 175, aspartate 177, histidine 179, phenylalanine 188, threonine 191, valine 194, serine 198, and phenylalanine 199. Positions 177 and 179 each coordinate Zn(2+). Residue lysine 221 is modified to N6-acetyllysine. A Ca(2+)-binding site is contributed by tyrosine 223. Cysteine 262 carries the S-nitrosocysteine modification. Aspartate 265 contributes to the Zn(2+) binding site. Arginine 271 provides a ligand contact to 1D-myo-inositol 1,4,5,6-tetrakisphosphate. Residue cysteine 274 is modified to S-nitrosocysteine. The segment at 389 to 488 (AVHEDSGDED…GTKSEQLSNP (100 aa)) is disordered. A phosphoserine mark is found at serine 394, serine 407, serine 422, and serine 424. Residues 402-417 (PDKRISIRASDKRIAC) are compositionally biased toward basic and acidic residues. A compositionally biased stretch (acidic residues) spans 418–428 (DEEFSDSEDEG). A compositionally biased stretch (basic and acidic residues) spans 429 to 481 (EGGRRNVADHKKGAKKARIEEDKKETEDKKTDVKEEDKSKDNSGEKTDTKGTK). Glycyl lysine isopeptide (Lys-Gly) (interchain with G-Cter in SUMO2) cross-links involve residues lysine 439, lysine 452, lysine 458, lysine 462, lysine 478, and lysine 481.

This sequence belongs to the histone deacetylase family. HD type 1 subfamily. As to quaternary structure, part of the core histone deacetylase (HDAC) complex composed of HDAC1, HDAC2, RBBP4 and RBBP7, the core complex associates with SIN3, SAP18 and SAP30 to form the SIN3 HDAC complex. Component of the nucleosome remodeling and deacetylase (NuRD) repressor complex, composed of core proteins MTA1, MTA2, MTA3, RBBP4, RBBP7, HDAC1, HDAC2, MBD2, MBD3, and peripherally associated proteins CDK2AP1, CDK2AP2, GATAD2A, GATAD2B, CHD3, CHD4 and CHD5. The exact stoichiometry of the NuRD complex is unknown, and some subunits such as MBD2 and MBD3, GATAD2A and GATAD2B, and CHD3, CHD4 and CHD5 define mutually exclusive NuRD complexes. Component of a RCOR/GFI/KDM1A/HDAC complex. Component of a BHC histone deacetylase complex that contains HDAC1, HDAC2, HMG20B, KDM1A, RCOR1 and PHF21A. The BHC complex may also contain ZMYM2, ZNF217, ZMYM3, GSE1 and GTF2I. Part of a complex containing the core histones H2A, H2B, H3 and H4, DEK and unphosphorylated DAXX. Part of a complex containing ATR and CHD4. Forms a heterologous complex at least with YY1. Interacts in the late S-phase of DNA-replication with DNMT1 in the other transcriptional repressor complex composed of DNMT1, DMAP1, PCNA, CAF1. Component of a mSin3A corepressor complex that contains SIN3A, SAP130, SUDS3, ARID4B, HDAC1 and HDAC2. Part of a complex composed of TRIM28, HDAC1, HDAC2 and EHMT2. Part of a complex containing at least CDYL, MIER1, MIER2, HDAC1 and HDAC2. Component of a histone deacetylase complex containing DNTTIP1, ZNF541, HDAC1 and HDAC2. Forms a complex comprising APPL1, RUVBL2, APPL2, CTNNB1 and HDAC1. Interacts directly with GFI1. Interacts directly with GFI1B. Interacts with APEX1; the interaction is not dependent on the acetylated status of APEX1. Interacts with ATR. Interacts with BCL6 (non-acetylated form). Interacts with BEND3. Interacts with CBFA2T3. Interacts with CDK2AP1. Interacts with CHD4. Interacts with CHD5. Interacts with CHFR. Interacts with CRY1. Interacts with DNMT1. Interacts with GATAD2A. Interacts with HCFC1. Interacts with HDAC7. Interacts with HDAC10. Interacts with INSM1. Interacts with KDM4A. Interacts with MACROH2A1 (via the non-histone region). Interacts with MBD3L2. Interacts with MTA1, with a preference for sumoylated MTA1. Interacts with NACC2. Interacts with NRIP1. Interacts with PELP1. Interacts with PIMREG. Interacts with PRDM6. Interacts with PWWP2B. Interacts with SAP30. Interacts with SAP30L. Interacts with SETDB1. Interacts with SIX3. Interacts with SMARCAD1. Interacts with SNW1. Interacts with SPHK2. Interacts with SPEN/MINT. Interacts (CK2 phosphorylated form) with SP3. Interacts with SUV39H1. Interacts with TSHZ3 (via its N-terminus). Interacts with ZMYND8. Interacts with ZNF431. Interacts with ZNF263; recruited to the SIX3 promoter along with other proteins involved in chromatin modification and transcriptional corepression where it contributes to transcriptional repression. Identified in a complex with HDAC1, KCTD19, DNTTIP1 and ZNF541. Component of the SIN3B complex, which includes SIN3B, HDAC2, PHF12 and MORF4L1; interacts directly with all subunits. It depends on Zn(2+) as a cofactor. The cofactor is Ca(2+). S-nitrosylated by GAPDH. In neurons, S-nitrosylation at Cys-262 and Cys-274 does not affect enzyme activity, but induces HDAC2 release from chromatin. This in turn increases acetylation of histones surrounding neurotrophin-dependent gene promoters and promotes their transcription. In embryonic cortical neurons, S-Nitrosylation regulates dendritic growth and branching. As to expression, widely expressed; lower levels in brain and lung.

Its subcellular location is the nucleus. The protein localises to the cytoplasm. The catalysed reaction is N(6)-acetyl-L-lysyl-[histone] + H2O = L-lysyl-[histone] + acetate. The enzyme catalyses N(6)-acetyl-L-lysyl-[protein] + H2O = L-lysyl-[protein] + acetate. It catalyses the reaction N(6)-(2E)-butenoyl-L-lysyl-[protein] + H2O = (2E)-2-butenoate + L-lysyl-[protein]. It carries out the reaction N(6)-(2-hydroxyisobutanoyl)-L-lysyl-[protein] + H2O = 2-hydroxy-2-methylpropanoate + L-lysyl-[protein]. The catalysed reaction is N(6)-[(S)-lactoyl]-L-lysyl-[protein] + H2O = (S)-lactate + L-lysyl-[protein]. With respect to regulation, inositol tetraphosphate (1D-myo-inositol 1,4,5,6-tetrakisphosphate) may act as an intermolecular glue between HDAC2 and N-Cor repressor complex components. Functionally, histone deacetylase that catalyzes the deacetylation of lysine residues on the N-terminal part of the core histones (H2A, H2B, H3 and H4). Histone deacetylation gives a tag for epigenetic repression and plays an important role in transcriptional regulation, cell cycle progression and developmental events. Histone deacetylases act via the formation of large multiprotein complexes. Forms transcriptional repressor complexes by associating with MAD, SIN3, YY1 and N-COR. Component of a RCOR/GFI/KDM1A/HDAC complex that suppresses, via histone deacetylase (HDAC) recruitment, a number of genes implicated in multilineage blood cell development. Acts as a component of the histone deacetylase NuRD complex which participates in the remodeling of chromatin. Component of the SIN3B complex that represses transcription and counteracts the histone acetyltransferase activity of EP300 through the recognition H3K27ac marks by PHF12 and the activity of the histone deacetylase HDAC2. Also deacetylates non-histone targets: deacetylates TSHZ3, thereby regulating its transcriptional repressor activity. May be involved in the transcriptional repression of circadian target genes, such as PER1, mediated by CRY1 through histone deacetylation. Involved in MTA1-mediated transcriptional corepression of TFF1 and CDKN1A. In addition to protein deacetylase activity, also acts as a protein-lysine deacylase by recognizing other acyl groups: catalyzes removal of (2E)-butenoyl (crotonyl), lactoyl (lactyl) and 2-hydroxyisobutanoyl (2-hydroxyisobutyryl) acyl groups from lysine residues, leading to protein decrotonylation, delactylation and de-2-hydroxyisobutyrylation, respectively. The sequence is that of Histone deacetylase 2 from Homo sapiens (Human).